A 469-amino-acid polypeptide reads, in one-letter code: Neuraminidase (469 aa).

At 1 to 6 (MNPNQK) the chain is on the intravirion side. Residues 7 to 29 (IITIGSVSLTIATACSLMQIAIL) form a helical membrane-spanning segment. The involved in apical transport and lipid raft association stretch occupies residues 11–33 (GSVSLTIATACSLMQIAILATTV). The Virion surface portion of the chain corresponds to 30–469 (ATTVTLHFKQ…DGANINFMPI (440 aa)). The hypervariable stalk region stretch occupies residues 36-88 (HFKQHECDSPASNQVMPCEPIIIERNITEIVYLNNTTIEKEICPEVVEYRNWS). N-linked (GlcNAc...) asparagine; by host glycosylation is found at asparagine 61, asparagine 69, asparagine 70, and asparagine 86. The interval 91–469 (QCQITGFAPF…DGANINFMPI (379 aa)) is head of neuraminidase. Disulfide bonds link cysteine 92–cysteine 417, cysteine 124–cysteine 129, cysteine 183–cysteine 230, cysteine 232–cysteine 237, cysteine 278–cysteine 291, cysteine 280–cysteine 289, cysteine 318–cysteine 337, and cysteine 421–cysteine 447. Residue arginine 118 coordinates substrate. N-linked (GlcNAc...) asparagine; by host glycosylation occurs at asparagine 146. Aspartate 151 acts as the Proton donor/acceptor in catalysis. Arginine 152 lines the substrate pocket. 2 N-linked (GlcNAc...) asparagine; by host glycosylation sites follow: asparagine 200 and asparagine 234. A substrate-binding site is contributed by 276–277 (EE). Arginine 292 contacts substrate. Aspartate 293, glycine 297, and aspartate 324 together coordinate Ca(2+). The interval 325 to 349 (TPRNDDSSSNSNCRDPNNERGNPGV) is disordered. A substrate-binding site is contributed by arginine 371. The N-linked (GlcNAc...) asparagine; by host glycan is linked to asparagine 402. Tyrosine 406 functions as the Nucleophile in the catalytic mechanism.

It belongs to the glycosyl hydrolase 34 family. In terms of assembly, homotetramer. The cofactor is Ca(2+). In terms of processing, N-glycosylated.

Its subcellular location is the virion membrane. The protein resides in the host apical cell membrane. The enzyme catalyses Hydrolysis of alpha-(2-&gt;3)-, alpha-(2-&gt;6)-, alpha-(2-&gt;8)- glycosidic linkages of terminal sialic acid residues in oligosaccharides, glycoproteins, glycolipids, colominic acid and synthetic substrates.. Inhibited by the neuraminidase inhibitors zanamivir (Relenza) and oseltamivir (Tamiflu). These drugs interfere with the release of progeny virus from infected cells and are effective against all influenza strains. Resistance to neuraminidase inhibitors is quite rare. Functionally, catalyzes the removal of terminal sialic acid residues from viral and cellular glycoconjugates. Cleaves off the terminal sialic acids on the glycosylated HA during virus budding to facilitate virus release. Additionally helps virus spread through the circulation by further removing sialic acids from the cell surface. These cleavages prevent self-aggregation and ensure the efficient spread of the progeny virus from cell to cell. Otherwise, infection would be limited to one round of replication. Described as a receptor-destroying enzyme because it cleaves a terminal sialic acid from the cellular receptors. May facilitate viral invasion of the upper airways by cleaving the sialic acid moieties on the mucin of the airway epithelial cells. Likely to plays a role in the budding process through its association with lipid rafts during intracellular transport. May additionally display a raft-association independent effect on budding. Plays a role in the determination of host range restriction on replication and virulence. Sialidase activity in late endosome/lysosome traffic seems to enhance virus replication. The sequence is that of Neuraminidase from Aves (Human).